A 344-amino-acid chain; its full sequence is Ferrochelatase (344 aa).

Histidine 214 and glutamate 295 together coordinate Fe cation.

Belongs to the ferrochelatase family.

It is found in the cytoplasm. It carries out the reaction heme b + 2 H(+) = protoporphyrin IX + Fe(2+). The protein operates within porphyrin-containing compound metabolism; protoheme biosynthesis; protoheme from protoporphyrin-IX: step 1/1. Functionally, catalyzes the ferrous insertion into protoporphyrin IX. The chain is Ferrochelatase from Rhizobium johnstonii (strain DSM 114642 / LMG 32736 / 3841) (Rhizobium leguminosarum bv. viciae).